Reading from the N-terminus, the 680-residue chain is Putative E3 ubiquitin-protein ligase UNKL (680 aa).

Positions 1-22 (MPSVSKAAAAALSGSPPQTEKP) are disordered. 4 consecutive C3H1-type zinc fingers follow at residues 75 to 104 (YSPD…HRTT), 115 to 145 (YYKT…HGPL), 243 to 277 (QYRS…HSRT), and 283 to 310 (PEST…HVEK). Composition is skewed to low complexity over residues 326-337 (TSPSSTGSGQPG), 375-396 (VSSS…SPTA), 465-497 (SLPR…VGSS), and 545-562 (SPSP…SASP). Disordered regions lie at residues 326 to 358 (TSPS…QDSK), 375 to 400 (VSSS…LPAP), 442 to 520 (DGHD…SAAS), and 545 to 566 (SPSP…NGAE). Residues 563 to 619 (NGAELARVRRQLDEAKRKIRQWEESWQQVKQVCDAWQREAQEAKERARVADSDRQLA) are a coiled coil. The RING-type zinc finger occupies 639–674 (CVACRERAHGAVLRPCQHHILCEPCAATAPECPYCK).

It belongs to the unkempt family. Isoform 4 (C-terminal) interacts with the GTP-bound form of RAC1. Isoform 4 (C-terminal) interacts with SMARCD2/BAF60b. Post-translationally, isoform 4 is ubiquitinated in the C-terminal. Ubiquitination is enhanced by activated RAC1. The presence of the RING finger domain is not essential for ubiquitination to occur.

It localises to the cytoplasm. Its subcellular location is the nucleus. Its pathway is protein modification; protein ubiquitination. Functionally, may participate in a protein complex showing an E3 ligase activity regulated by RAC1. Ubiquitination is directed towards itself and possibly other substrates, such as SMARCD2/BAF60b. Intrinsic E3 ligase activity has not been proven. This Homo sapiens (Human) protein is Putative E3 ubiquitin-protein ligase UNKL (UNKL).